The sequence spans 82 residues: Small ribosomal subunit protein bS20 (82 aa).

The protein belongs to the bacterial ribosomal protein bS20 family.

Its function is as follows. Binds directly to 16S ribosomal RNA. The protein is Small ribosomal subunit protein bS20 of Streptococcus suis (strain 98HAH33).